A 453-amino-acid chain; its full sequence is MPRLFGTDGVRGLANGTLTADLALGLAQAAAAVLTRGRSAEARRAVGKRPLAIVARDPRVSGEFLSAAVAAGLASSGIDVYDAGVIPTPAAAFLIADFDADFGVMVSASHNPAPDNGIKIFARGGTKLPDVVEDRIEEHLHLEKLTPTGAEVGRIQCFADAEDRYVLHLLASLPHRLDGIHVVLDCAHGAAAGISPEVFTDAGARVTVIGDAPDGMNINDGVGSTHLDRLAEAVLAAGADVGIAHDGDADRCLAIDASGRTVDGDQIMAILALGMKERGKLRDDTLVATVMSNLGLKLAMREAGVRVVETAVGDRYVLEEMNGHGYSLGGEQSGHVIMSDFATTGDGILTGLHLLSEMARQRKTLAELAQAMTVYPQVMVNVRGVDHHSVHSDELLRSAVEAVEAALGDSGRVLLRPSGTEPLVRVMVEAADQETAVRMANELADVVRERLAG.

The active-site Phosphoserine intermediate is the serine 109. Residues serine 109, aspartate 246, aspartate 248, and aspartate 250 each contribute to the Mg(2+) site. At serine 109 the chain carries Phosphoserine.

It belongs to the phosphohexose mutase family. Mg(2+) serves as cofactor. Post-translationally, activated by phosphorylation.

It carries out the reaction alpha-D-glucosamine 1-phosphate = D-glucosamine 6-phosphate. In terms of biological role, catalyzes the conversion of glucosamine-6-phosphate to glucosamine-1-phosphate. This Leifsonia xyli subsp. xyli (strain CTCB07) protein is Phosphoglucosamine mutase.